The chain runs to 98 residues: Putative septation protein SpoVG (98 aa).

The protein belongs to the SpoVG family.

Essential for sporulation. Interferes with or is a negative regulator of the pathway leading to asymmetric septation. This is Putative septation protein SpoVG from Shouchella clausii (strain KSM-K16) (Alkalihalobacillus clausii).